The chain runs to 369 residues: DNA replication and repair protein RecF (369 aa).

Position 30-37 (30-37) interacts with ATP; the sequence is GRNAQGKT.

It belongs to the RecF family.

It is found in the cytoplasm. Its function is as follows. The RecF protein is involved in DNA metabolism; it is required for DNA replication and normal SOS inducibility. RecF binds preferentially to single-stranded, linear DNA. It also seems to bind ATP. In Streptococcus agalactiae serotype III (strain NEM316), this protein is DNA replication and repair protein RecF.